The chain runs to 981 residues: Mediator of RNA polymerase II transcription subunit 5 (981 aa).

It belongs to the Mediator complex subunit 5 family. As to quaternary structure, component of the Mediator complex.

The protein resides in the nucleus. Component of the Mediator complex, a coactivator involved in the regulated transcription of nearly all RNA polymerase II-dependent genes. Mediator functions as a bridge to convey information from gene-specific regulatory proteins to the basal RNA polymerase II transcription machinery. Mediator is recruited to promoters by direct interactions with regulatory proteins and serves as a scaffold for the assembly of a functional preinitiation complex with RNA polymerase II and the general transcription factors. In Scheffersomyces stipitis (strain ATCC 58785 / CBS 6054 / NBRC 10063 / NRRL Y-11545) (Yeast), this protein is Mediator of RNA polymerase II transcription subunit 5 (NUT1).